Consider the following 671-residue polypeptide: tRNA 5-methylaminomethyl-2-thiouridine biosynthesis bifunctional protein MnmC (671 aa).

Residues 1 to 245 (MVNVMNTLSF…KREMLWGEKP (245 aa)) form a tRNA (mnm(5)s(2)U34)-methyltransferase region. An FAD-dependent cmnm(5)s(2)U34 oxidoreductase region spans residues 272 to 671 (VGGGVASLFV…RKLLKGSKVE (400 aa)).

It in the N-terminal section; belongs to the methyltransferase superfamily. tRNA (mnm(5)s(2)U34)-methyltransferase family. This sequence in the C-terminal section; belongs to the DAO family. The cofactor is FAD.

The protein resides in the cytoplasm. It catalyses the reaction 5-aminomethyl-2-thiouridine(34) in tRNA + S-adenosyl-L-methionine = 5-methylaminomethyl-2-thiouridine(34) in tRNA + S-adenosyl-L-homocysteine + H(+). Catalyzes the last two steps in the biosynthesis of 5-methylaminomethyl-2-thiouridine (mnm(5)s(2)U) at the wobble position (U34) in tRNA. Catalyzes the FAD-dependent demodification of cmnm(5)s(2)U34 to nm(5)s(2)U34, followed by the transfer of a methyl group from S-adenosyl-L-methionine to nm(5)s(2)U34, to form mnm(5)s(2)U34. The chain is tRNA 5-methylaminomethyl-2-thiouridine biosynthesis bifunctional protein MnmC from Actinobacillus pleuropneumoniae serotype 5b (strain L20).